The following is a 248-amino-acid chain: tRNA (guanine-N(1)-)-methyltransferase (248 aa).

S-adenosyl-L-methionine-binding positions include Gly-117 and 137–142 (LGDFVL).

This sequence belongs to the RNA methyltransferase TrmD family. As to quaternary structure, homodimer.

The protein resides in the cytoplasm. It catalyses the reaction guanosine(37) in tRNA + S-adenosyl-L-methionine = N(1)-methylguanosine(37) in tRNA + S-adenosyl-L-homocysteine + H(+). In terms of biological role, specifically methylates guanosine-37 in various tRNAs. This chain is tRNA (guanine-N(1)-)-methyltransferase, found in Herminiimonas arsenicoxydans.